The chain runs to 268 residues: Hydroxyethylthiazole kinase (268 aa).

Position 45 (M45) interacts with substrate. Residues R121 and T167 each contribute to the ATP site. Substrate is bound at residue G194.

This sequence belongs to the Thz kinase family. It depends on Mg(2+) as a cofactor.

It carries out the reaction 5-(2-hydroxyethyl)-4-methylthiazole + ATP = 4-methyl-5-(2-phosphooxyethyl)-thiazole + ADP + H(+). The protein operates within cofactor biosynthesis; thiamine diphosphate biosynthesis; 4-methyl-5-(2-phosphoethyl)-thiazole from 5-(2-hydroxyethyl)-4-methylthiazole: step 1/1. Its function is as follows. Catalyzes the phosphorylation of the hydroxyl group of 4-methyl-5-beta-hydroxyethylthiazole (THZ). The polypeptide is Hydroxyethylthiazole kinase (Bacillus anthracis (strain A0248)).